Here is a 281-residue protein sequence, read N- to C-terminus: 4-diphosphocytidyl-2-C-methyl-D-erythritol kinase (281 aa).

The active site involves Lys-11. Pro-95 to Ser-105 contributes to the ATP binding site. The active site involves Asp-137.

This sequence belongs to the GHMP kinase family. IspE subfamily.

It catalyses the reaction 4-CDP-2-C-methyl-D-erythritol + ATP = 4-CDP-2-C-methyl-D-erythritol 2-phosphate + ADP + H(+). It functions in the pathway isoprenoid biosynthesis; isopentenyl diphosphate biosynthesis via DXP pathway; isopentenyl diphosphate from 1-deoxy-D-xylulose 5-phosphate: step 3/6. Catalyzes the phosphorylation of the position 2 hydroxy group of 4-diphosphocytidyl-2C-methyl-D-erythritol. This chain is 4-diphosphocytidyl-2-C-methyl-D-erythritol kinase, found in Geobacter metallireducens (strain ATCC 53774 / DSM 7210 / GS-15).